The primary structure comprises 491 residues: Protein nucleotidyltransferase YdiU (491 aa).

Positions 88, 90, 91, 111, 123, 124, 174, and 181 each coordinate ATP. The active-site Proton acceptor is D250. Positions 251 and 260 each coordinate Mg(2+). Position 260 (D260) interacts with ATP. Positions 466–484 are enriched in basic and acidic residues; the sequence is DDQPDRADYAEPPQPEERV. The segment at 466–491 is disordered; the sequence is DDQPDRADYAEPPQPEERVLQTFCGT.

Belongs to the SELO family. The cofactor is Mg(2+). It depends on Mn(2+) as a cofactor.

It carries out the reaction L-seryl-[protein] + ATP = 3-O-(5'-adenylyl)-L-seryl-[protein] + diphosphate. The catalysed reaction is L-threonyl-[protein] + ATP = 3-O-(5'-adenylyl)-L-threonyl-[protein] + diphosphate. The enzyme catalyses L-tyrosyl-[protein] + ATP = O-(5'-adenylyl)-L-tyrosyl-[protein] + diphosphate. It catalyses the reaction L-histidyl-[protein] + UTP = N(tele)-(5'-uridylyl)-L-histidyl-[protein] + diphosphate. It carries out the reaction L-seryl-[protein] + UTP = O-(5'-uridylyl)-L-seryl-[protein] + diphosphate. The catalysed reaction is L-tyrosyl-[protein] + UTP = O-(5'-uridylyl)-L-tyrosyl-[protein] + diphosphate. In terms of biological role, nucleotidyltransferase involved in the post-translational modification of proteins. It can catalyze the addition of adenosine monophosphate (AMP) or uridine monophosphate (UMP) to a protein, resulting in modifications known as AMPylation and UMPylation. The protein is Protein nucleotidyltransferase YdiU of Bradyrhizobium sp. (strain ORS 278).